An 89-amino-acid polypeptide reads, in one-letter code: Cell division protein ZapA (89 aa).

It belongs to the ZapA family. Type 2 subfamily. In terms of assembly, homodimer. Interacts with FtsZ.

It is found in the cytoplasm. In terms of biological role, activator of cell division through the inhibition of FtsZ GTPase activity, therefore promoting FtsZ assembly into bundles of protofilaments necessary for the formation of the division Z ring. It is recruited early at mid-cell but it is not essential for cell division. In Bacillus mycoides (strain KBAB4) (Bacillus weihenstephanensis), this protein is Cell division protein ZapA.